Reading from the N-terminus, the 333-residue chain is Phosphoribosylformylglycinamidine cyclo-ligase (333 aa).

It belongs to the AIR synthase family.

It is found in the cytoplasm. The enzyme catalyses 2-formamido-N(1)-(5-O-phospho-beta-D-ribosyl)acetamidine + ATP = 5-amino-1-(5-phospho-beta-D-ribosyl)imidazole + ADP + phosphate + H(+). Its pathway is purine metabolism; IMP biosynthesis via de novo pathway; 5-amino-1-(5-phospho-D-ribosyl)imidazole from N(2)-formyl-N(1)-(5-phospho-D-ribosyl)glycinamide: step 2/2. The polypeptide is Phosphoribosylformylglycinamidine cyclo-ligase (Methanosarcina barkeri (strain Fusaro / DSM 804)).